The following is a 471-amino-acid chain: 3-isopropylmalate dehydratase large subunit (471 aa).

Residues cysteine 347, cysteine 407, and cysteine 410 each coordinate [4Fe-4S] cluster.

It belongs to the aconitase/IPM isomerase family. LeuC type 1 subfamily. In terms of assembly, heterodimer of LeuC and LeuD. The cofactor is [4Fe-4S] cluster.

The catalysed reaction is (2R,3S)-3-isopropylmalate = (2S)-2-isopropylmalate. It participates in amino-acid biosynthesis; L-leucine biosynthesis; L-leucine from 3-methyl-2-oxobutanoate: step 2/4. In terms of biological role, catalyzes the isomerization between 2-isopropylmalate and 3-isopropylmalate, via the formation of 2-isopropylmaleate. This is 3-isopropylmalate dehydratase large subunit from Geobacillus kaustophilus (strain HTA426).